The following is a 228-amino-acid chain: Ras-related protein Rab-32D (228 aa).

16 to 23 is a binding site for GTP; that stretch reads GDVNVGKT. An Effector region motif is present at residues 38–46; sequence YKSTIGADF. Residues 64–68 and 128–131 each bind GTP; these read DTAGQ and NKSD. Residues 183 to 228 form a disordered region; it reads SDNEQFNDSPDEETSSITLLGTSKKHDNTNPNKPSTSSPSSCFNCK. Residues 185-196 show a composition bias toward acidic residues; the sequence is NEQFNDSPDEET. Low complexity predominate over residues 211–228; sequence TNPNKPSTSSPSSCFNCK. C224 is lipidated: S-geranylgeranyl cysteine.

This sequence belongs to the small GTPase superfamily. Rab family.

The sequence is that of Ras-related protein Rab-32D (rab32D) from Dictyostelium discoideum (Social amoeba).